The primary structure comprises 456 residues: ATP synthase subunit beta 1 (456 aa).

Residue 152-159 coordinates ATP; that stretch reads GGAGVGKS.

Belongs to the ATPase alpha/beta chains family. F-type ATPases have 2 components, CF(1) - the catalytic core - and CF(0) - the membrane proton channel. CF(1) has five subunits: alpha(3), beta(3), gamma(1), delta(1), epsilon(1). CF(0) has three main subunits: a(1), b(2) and c(9-12). The alpha and beta chains form an alternating ring which encloses part of the gamma chain. CF(1) is attached to CF(0) by a central stalk formed by the gamma and epsilon chains, while a peripheral stalk is formed by the delta and b chains.

The protein localises to the cell membrane. It catalyses the reaction ATP + H2O + 4 H(+)(in) = ADP + phosphate + 5 H(+)(out). Produces ATP from ADP in the presence of a proton gradient across the membrane. The catalytic sites are hosted primarily by the beta subunits. The protein is ATP synthase subunit beta 1 of Listeria monocytogenes serovar 1/2a (strain ATCC BAA-679 / EGD-e).